Here is a 105-residue protein sequence, read N- to C-terminus: Large ribosomal subunit protein uL24 (105 aa).

Belongs to the universal ribosomal protein uL24 family. In terms of assembly, part of the 50S ribosomal subunit.

Functionally, one of two assembly initiator proteins, it binds directly to the 5'-end of the 23S rRNA, where it nucleates assembly of the 50S subunit. One of the proteins that surrounds the polypeptide exit tunnel on the outside of the subunit. The sequence is that of Large ribosomal subunit protein uL24 from Clostridium botulinum (strain ATCC 19397 / Type A).